The chain runs to 426 residues: Histidinol dehydrogenase (426 aa).

3 residues coordinate NAD(+): tyrosine 125, glutamine 187, and asparagine 210. Positions 233, 255, and 258 each coordinate substrate. Residues glutamine 255 and histidine 258 each contribute to the Zn(2+) site. Residues glutamate 323 and histidine 324 each act as proton acceptor in the active site. Substrate-binding residues include histidine 324, aspartate 357, glutamate 411, and histidine 416. Aspartate 357 serves as a coordination point for Zn(2+). Histidine 416 serves as a coordination point for Zn(2+).

Belongs to the histidinol dehydrogenase family. It depends on Zn(2+) as a cofactor.

It catalyses the reaction L-histidinol + 2 NAD(+) + H2O = L-histidine + 2 NADH + 3 H(+). The protein operates within amino-acid biosynthesis; L-histidine biosynthesis; L-histidine from 5-phospho-alpha-D-ribose 1-diphosphate: step 9/9. Catalyzes the sequential NAD-dependent oxidations of L-histidinol to L-histidinaldehyde and then to L-histidine. This is Histidinol dehydrogenase (hisD) from Methanothermobacter thermautotrophicus (strain ATCC 29096 / DSM 1053 / JCM 10044 / NBRC 100330 / Delta H) (Methanobacterium thermoautotrophicum).